Here is a 267-residue protein sequence, read N- to C-terminus: MSFDVYVIRVFGKSRGSREAGMSVSAGLEVAAGSVASALAAQEGGAMRVELCHGLGGGGLTPSYGMLAVVRERLHIPLYVLIRPRGGDFVFSEEEMEVMCCDVECCVRLGCDGVVLGALDPAGEVDMGMMRVLIAVAGSLGVTFHRAIDVSADPGRTLEDVIALGCERVLTSGGRSSALEGAETIAALVAQAAGRVVVMPGAGVSAGNVLELRVRTGAHEFHASARSVVAARRLGPHPDIHDLGGDYDCTDVDKVRQLVRLLSQGAS.

Belongs to the CutC family.

The protein resides in the cytoplasm. This is PF03932 family protein CutC from Xylella fastidiosa (strain 9a5c).